The primary structure comprises 246 residues: Transcription factor MYB113 (246 aa).

2 consecutive HTH myb-type domains span residues 5-61 and 62-112; these read PKGL…KPSI and KRGK…SKKH. 2 DNA-binding regions (H-T-H motif) span residues 33–57 and 85–108; these read WHRVPLRTGLNRCRKSCRLRWLNYL and WSLIAGRLPGRTANDVKNYWNTHL.

Interacts with BHLH002/EGL3/MYC146, BHLH012/MYC1 and BHLH042/TT8.

It is found in the nucleus. Functionally, transcription activator, when associated with BHLH002/EGL3/MYC146, BHLH012/MYC1, or BHLH042/TT8. The polypeptide is Transcription factor MYB113 (MYB113) (Arabidopsis thaliana (Mouse-ear cress)).